Consider the following 264-residue polypeptide: Indole-3-glycerol phosphate synthase (264 aa).

It belongs to the TrpC family.

The catalysed reaction is 1-(2-carboxyphenylamino)-1-deoxy-D-ribulose 5-phosphate + H(+) = (1S,2R)-1-C-(indol-3-yl)glycerol 3-phosphate + CO2 + H2O. It participates in amino-acid biosynthesis; L-tryptophan biosynthesis; L-tryptophan from chorismate: step 4/5. This chain is Indole-3-glycerol phosphate synthase, found in Rhizorhabdus wittichii (strain DSM 6014 / CCUG 31198 / JCM 15750 / NBRC 105917 / EY 4224 / RW1) (Sphingomonas wittichii).